A 338-amino-acid polypeptide reads, in one-letter code: tRNA N6-adenosine threonylcarbamoyltransferase (338 aa).

The Fe cation site is built by H111 and H115. Substrate-binding positions include 134–138 (VVSGG), D167, G180, D184, and N272. Fe cation is bound at residue D300.

The protein belongs to the KAE1 / TsaD family. It depends on Fe(2+) as a cofactor.

Its subcellular location is the cytoplasm. It catalyses the reaction L-threonylcarbamoyladenylate + adenosine(37) in tRNA = N(6)-L-threonylcarbamoyladenosine(37) in tRNA + AMP + H(+). Required for the formation of a threonylcarbamoyl group on adenosine at position 37 (t(6)A37) in tRNAs that read codons beginning with adenine. Is involved in the transfer of the threonylcarbamoyl moiety of threonylcarbamoyl-AMP (TC-AMP) to the N6 group of A37, together with TsaE and TsaB. TsaD likely plays a direct catalytic role in this reaction. In Syntrophus aciditrophicus (strain SB), this protein is tRNA N6-adenosine threonylcarbamoyltransferase.